We begin with the raw amino-acid sequence, 668 residues long: MATRRELANAIRFLSMDAVQKAKSGHPGAPMGMADIAEVLWRDFLKHNPSNPHWADRDRFILSNGHGSMLIYSLLHLSGYDLSIEDLKQFRQLHSKTPGHPEYGYAPGVETTTGPLGQGITNAVGFAIAEKTLAHQFNRPGHEIVDHHTYVFLGDGCLMEGISHEACSLAGTLGLGKLIAFYDDNNISIDGHVDGWFTDDTQKRFEAYGWHVIPAVDGHNPEQILEAVKQAQAETTKPTLIICKTIIGYGSPNKANSHDCHGAPLGDDEIAAAREFLKWEHAPFEIPAEIYAQWDAKEKGQVAEKAWEEKLAAYAKAYPELAAEFTRRVNAELPANWAAESQAFIEHLQANPANIASRKASQNAIEAYAKLLPEFLGGSADLASSNLTLWSGSKPIRAVENADGNYINYGVREFGMSAIMNGIALHGGFIPYGATFLMFMEYAHNAVRMAALMKQRSLFVYTHDSIGLGEDGPTHQPVEQTSALRLIPNLETWRPCDQVESAVAWKAAVERKEGPSALIFTRQNLAQMDRTAEQLANVARGGYVLRHCCENQNCPDLILIATGSEVELAMKAADVLDAEGVKVRVVSMPSTNVFDKQDAAYRESVLPSHITKRVAIEAGIADFWYKYVGFEGRVVGMNSFGESAPADQLFKLFGFTVENVVAKAKEIL.

A substrate-binding site is contributed by histidine 26. Residues histidine 66 and 114 to 116 (GPL) contribute to the thiamine diphosphate site. Aspartate 155 serves as a coordination point for Mg(2+). Positions 156 and 185 each coordinate thiamine diphosphate. Residues asparagine 185 and isoleucine 187 each coordinate Mg(2+). Substrate-binding residues include histidine 261, arginine 358, and serine 385. Histidine 261 lines the thiamine diphosphate pocket. Glutamate 413 serves as the catalytic Proton donor. Phenylalanine 439 contributes to the thiamine diphosphate binding site. 3 residues coordinate substrate: histidine 463, aspartate 471, and arginine 522.

Belongs to the transketolase family. As to quaternary structure, homodimer. Mg(2+) is required as a cofactor. It depends on Ca(2+) as a cofactor. Mn(2+) serves as cofactor. The cofactor is Co(2+). Requires thiamine diphosphate as cofactor.

It catalyses the reaction D-sedoheptulose 7-phosphate + D-glyceraldehyde 3-phosphate = aldehydo-D-ribose 5-phosphate + D-xylulose 5-phosphate. Functionally, catalyzes the transfer of a two-carbon ketol group from a ketose donor to an aldose acceptor, via a covalent intermediate with the cofactor thiamine pyrophosphate. The protein is Transketolase 2 (tktB) of Pasteurella multocida (strain Pm70).